Reading from the N-terminus, the 668-residue chain is Spindle assembly abnormal protein 6 homolog (668 aa).

A PISA domain is found at 39–91 (VHKKELVVRLSDDTDPFFLYNLTLGEEDFQSLKNQQGLLVEFSAFPQRFIDLL). Residues 182-482 (LGVTQQALAE…NVIAWLNKQL (301 aa)) are a coiled coil. Residues 623–668 (GSVPVKGQRNGSSAGTVPVRPALPKSGSSPILSAYFPGQQSRLPAS) form a disordered region.

In terms of assembly, nine homodimers form a cartwheel structure with an internal diameter of 23 nM and radial spokes connecting to the microtubule triplets.

Its subcellular location is the cytoplasm. The protein resides in the cytoskeleton. It localises to the microtubule organizing center. The protein localises to the centrosome. Central scaffolding component of the centrioles ensuring their 9-fold symmetry. Required for centrosome biogenesis and duplication: required both for mother-centriole-dependent centriole duplication and deuterosome-dependent centriole amplification in multiciliated cells. The polypeptide is Spindle assembly abnormal protein 6 homolog (sas6) (Xenopus laevis (African clawed frog)).